Here is a 500-residue protein sequence, read N- to C-terminus: L-arabinose isomerase (500 aa).

Residues Glu306, Glu333, His349, and His448 each contribute to the Mn(2+) site.

It belongs to the arabinose isomerase family. It depends on Mn(2+) as a cofactor.

The enzyme catalyses beta-L-arabinopyranose = L-ribulose. The protein operates within carbohydrate degradation; L-arabinose degradation via L-ribulose; D-xylulose 5-phosphate from L-arabinose (bacterial route): step 1/3. Functionally, catalyzes the conversion of L-arabinose to L-ribulose. The chain is L-arabinose isomerase from Shewanella sp. (strain MR-7).